The sequence spans 62 residues: Sperm protamine P1 (62 aa).

The disordered stretch occupies residues 1–62; it reads MARYRHSRSR…RYSRRRRRRY (62 aa).

Belongs to the protamine P1 family. In terms of tissue distribution, testis.

It is found in the nucleus. It localises to the chromosome. Its function is as follows. Protamines substitute for histones in the chromatin of sperm during the haploid phase of spermatogenesis. They compact sperm DNA into a highly condensed, stable and inactive complex. This chain is Sperm protamine P1 (PRM1), found in Dorcopsulus vanheurni (Lesser forest wallaby).